The chain runs to 338 residues: Serpentine receptor class alpha-31 (338 aa).

7 helical membrane-spanning segments follow: residues 23–43 (GNHC…VFAI), 59–79 (LLFS…GIRI), 108–125 (LYYY…SLFF), 142–162 (FSKI…YWIF), 188–208 (VNEF…VIFF), 240–260 (VCII…TTEI), and 276–296 (SIAF…IIIY).

It belongs to the nematode receptor-like protein sra family.

The protein localises to the membrane. This Caenorhabditis elegans protein is Serpentine receptor class alpha-31 (sra-31).